The following is a 29-amino-acid chain: SKYESEGVARSEELQEVHQAFADAGRKPI.

A compositionally biased stretch (basic and acidic residues) spans 1-16 (SKYESEGVARSEELQE). The disordered stretch occupies residues 1–29 (SKYESEGVARSEELQEVHQAFADAGRKPI).

As to quaternary structure, muscle myosin is a hexameric protein that consists of 2 heavy chain subunits (MHC), 2 alkali light chain subunits (MLC) and 2 regulatory light chain subunits (MLC-2).

The protein resides in the cytoplasm. It localises to the myofibril. Functionally, muscle contraction. This Bombyx mori (Silk moth) protein is Myosin heavy chain, muscle.